The primary structure comprises 277 residues: Co-chaperone protein DjlA (277 aa).

Topologically, residues 1–6 are periplasmic; that stretch reads MRYWGK. The helical transmembrane segment at 7–31 threads the bilayer; the sequence is LLGLVLGVMYAPGVVGALLGLLVGH. Residues 32–277 lie on the Cytoplasmic side of the membrane; it reads MVDRALGAKR…DLIKREKGFK (246 aa). A J domain is found at 211–277; sequence DACKVLGVNS…DLIKREKGFK (67 aa).

Homodimer.

The protein resides in the cell inner membrane. Its function is as follows. Regulatory DnaK co-chaperone. Direct interaction between DnaK and DjlA is needed for the induction of the wcaABCDE operon, involved in the synthesis of a colanic acid polysaccharide capsule, possibly through activation of the RcsB/RcsC phosphotransfer signaling pathway. The colanic acid capsule may help the bacterium survive conditions outside the host. This Yersinia pseudotuberculosis serotype I (strain IP32953) protein is Co-chaperone protein DjlA.